The following is a 250-amino-acid chain: tRNA pseudouridine synthase A (250 aa).

Residue D53 is the Nucleophile of the active site. Position 111 (Y111) interacts with substrate.

The protein belongs to the tRNA pseudouridine synthase TruA family. In terms of assembly, homodimer.

It catalyses the reaction uridine(38/39/40) in tRNA = pseudouridine(38/39/40) in tRNA. Functionally, formation of pseudouridine at positions 38, 39 and 40 in the anticodon stem and loop of transfer RNAs. The protein is tRNA pseudouridine synthase A of Streptococcus uberis (strain ATCC BAA-854 / 0140J).